The chain runs to 535 residues: Alpha-1,3-mannosyl-glycoprotein 4-beta-N-acetylglucosaminyltransferase A (535 aa).

The Cytoplasmic portion of the chain corresponds to 1–6; the sequence is MRLRNG. A helical; Signal-anchor for type II membrane protein membrane pass occupies residues 7 to 27; that stretch reads TVATVLAFITSFLTLSWYTTW. Residues 28-535 are Lumenal-facing; sequence QNGKEKVIAY…NEIHIKKVTN (508 aa). Residues 31–57 adopt a coiled-coil conformation; it reads KEKVIAYQREFLALKERLRIAEHRISQ. 2 N-linked (GlcNAc...) asparagine glycosylation sites follow: asparagine 77 and asparagine 458. Serine 474 is subject to Phosphoserine.

Belongs to the glycosyltransferase 54 family. A divalent metal cation serves as cofactor. In terms of processing, N-glycosylated. In terms of tissue distribution, highly expressed in small intestine, kidney, lung and spleen. Weakly expressed in brain, heart and liver.

The protein resides in the golgi apparatus membrane. The protein localises to the secreted. It carries out the reaction N(4)-{beta-D-GlcNAc-(1-&gt;2)-alpha-D-Man-(1-&gt;3)-[beta-D-GlcNAc-(1-&gt;2)-alpha-D-Man-(1-&gt;6)]-beta-D-Man-(1-&gt;4)-beta-D-GlcNAc-(1-&gt;4)-beta-D-GlcNAc}-L-asparaginyl-[protein] + UDP-N-acetyl-alpha-D-glucosamine = N(4)-{beta-D-GlcNAc-(1-&gt;2)-[beta-D-GlcNAc-(1-&gt;4)]-alpha-D-Man-(1-&gt;3)-[beta-D-GlcNAc-(1-&gt;2)-alpha-D-Man-(1-&gt;6)]-beta-D-Man-(1-&gt;4)-beta-D-GlcNAc-(1-&gt;4)-beta-D-GlcNAc}-L-asparaginyl-[protein] + UDP + H(+). The enzyme catalyses an N(4)-{beta-D-GlcNAc-(1-&gt;2)-alpha-D-Man-(1-&gt;3)-[alpha-D-Man-(1-&gt;6)]-beta-D-Man-(1-&gt;4)-beta-D-GlcNAc-(1-&gt;4)-beta-D-GlcNAc}-L-asparaginyl-[protein] + UDP-N-acetyl-alpha-D-glucosamine = an N(4)-{beta-D-GlcNAc-(1-&gt;2)-[beta-D-GlcNAc-(1-&gt;4)]-alpha-D-Man-(1-&gt;3)-[alpha-D-Man-(1-&gt;6)]-beta-D-Man-(1-&gt;4)-beta-D-GlcNAc-(1-&gt;4)-beta-D-GlcNAc}-L-asparaginyl-[protein] + UDP + H(+). It catalyses the reaction an N(4)-{beta-D-GlcNAc-(1-&gt;2)-alpha-D-Man-(1-&gt;3)-[beta-D-GlcNAc-(1-&gt;2)-[beta-D-GlcNAc-(1-&gt;6)]-alpha-D-Man-(1-&gt;6)]-beta-D-Man-(1-&gt;4)-beta-D-GlcNAc-(1-&gt;4)-beta-D-GlcNAc}-L-asparaginyl-[protein] + UDP-N-acetyl-alpha-D-glucosamine = an N(4)-{beta-D-GlcNAc-(1-&gt;2)-[beta-D-GlcNAc-(1-&gt;4)]-alpha-D-Man-(1-&gt;3)-[beta-D-GlcNAc-(1-&gt;2)-[beta-D-GlcNAc-(1-&gt;6)]-alpha-D-Man-(1-&gt;6)]-beta-D-Man-(1-&gt;4)-beta-D-GlcNAc-(1-&gt;4)-beta-D-GlcNAc}-L-asparaginyl-[protein] + UDP + H(+). The catalysed reaction is an N(4)-{beta-D-GlcNAc-(1-&gt;2)-alpha-D-Man-(1-&gt;3)-[beta-D-GlcNAc-(1-&gt;2)-alpha-D-Man-(1-&gt;6)]-beta-D-Man-(1-&gt;4)-beta-D-GlcNAc-(1-&gt;4)-[alpha-L-Fuc-(1-&gt;6)]-beta-D-GlcNAc}-L-asparaginyl-[protein] + UDP-N-acetyl-alpha-D-glucosamine = N(4)-{beta-D-GlcNAc-(1-&gt;2)-[beta-D-GlcNAc-(1-&gt;4)]-alpha-D-Man-(1-&gt;3)-[beta-D-GlcNAc-(1-&gt;2)-alpha-D-Man-(1-&gt;6)]-beta-D-Man-(1-&gt;4)-beta-D-GlcNAc-(1-&gt;4)-[alpha-L-Fuc-(1-&gt;6)]-beta-D-GlcNAc}-asparaginyl-[protein] + UDP + H(+). It carries out the reaction an N(4)-{beta-D-GlcNAc-(1-&gt;2)-alpha-D-Man-(1-&gt;3)-[beta-D-Gal-(1-&gt;4)-beta-D-GlcNAc-(1-&gt;2)-alpha-D-Man-(1-&gt;6)]-beta-D-Man-(1-&gt;4)-beta-D-GlcNAc-(1-&gt;4)-beta-D-GlcNAc}-L-asparaginyl-[protein] + UDP-N-acetyl-alpha-D-glucosamine = an N(4)-{beta-D-GlcNAc-(1-&gt;2)-[beta-D-GlcNAc-(1-&gt;4)]-alpha-D-Man-(1-&gt;3)-[beta-D-Gal-(1-&gt;4)-beta-D-GlcNAc-(1-&gt;2)-alpha-D-Man-(1-&gt;6)]-beta-D-Man-(1-&gt;4)-beta-D-GlcNAc-(1-&gt;4)-beta-D-GlcNAc}-L-asparaginyl-[protein] + UDP + H(+). The enzyme catalyses N(4)-{beta-D-GlcNAc-(1-&gt;2)-alpha-D-Man-(1-&gt;3)-[alpha-D-Man-(1-&gt;3)-{alpha-D-Man-(1-&gt;6)}-alpha-D-Man-(1-&gt;6)]-beta-D-Man-(1-&gt;4)-beta-D-GlcNAc-(1-&gt;4)-beta-D-GlcNAc}-asparaginyl-[protein] + UDP-N-acetyl-alpha-D-glucosamine = N(4)-{beta-D-GlcNAc-(1-&gt;2)-[beta-D-GlcNAc-(1-&gt;4)]-alpha-D-Man-(1-&gt;3)-[alpha-D-Man-(1-&gt;3)-{alpha-D-Man-(1-&gt;6)}-alpha-D-Man-(1-&gt;6)]-beta-D-Man-(1-&gt;4)-beta-D-GlcNAc-(1-&gt;4)-beta-D-GlcNAc}-asparaginyl-[protein] + UDP + H(+). It catalyses the reaction N(4)-{beta-D-GlcNAc-(1-&gt;2)-alpha-D-Man-(1-&gt;3)-beta-D-Man-(1-&gt;4)-beta-D-GlcNAc-(1-&gt;4)-beta-D-GlcNAc}-asparaginyl-[protein] + UDP-N-acetyl-alpha-D-glucosamine = N(4)-{beta-D-GlcNAc-(1-&gt;2)-[beta-D-GlcNAc-(1-&gt;4)]-alpha-D-Man-(1-&gt;3)-beta-D-Man-(1-&gt;4)-beta-D-GlcNAc-(1-&gt;4)-beta-D-GlcNAc}-asparaginyl-[protein] + UDP + H(+). The protein operates within protein modification; protein glycosylation. Inhibited by UDP. Its function is as follows. Glycosyltransferase that catalyze the transfer of GlcNAc from UDP-GlcNAc to the GlcNAcbeta1-2Manalpha1-3 arm of the core structure of N-linked glycans through a beta1-4 linkage and participates in the production of tri- and tetra-antennary N-linked sugar chains. Involved in glucose transport by mediating SLC2A2/GLUT2 glycosylation, thereby controlling cell-surface expression of SLC2A2 in pancreatic beta cells. This chain is Alpha-1,3-mannosyl-glycoprotein 4-beta-N-acetylglucosaminyltransferase A, found in Bos taurus (Bovine).